A 399-amino-acid polypeptide reads, in one-letter code: MTILGTALTTNATKVMLLGAGELGKEVIIECQRLGIETIAVDRYANAPAMHVAHRHYVVNMLDSEALKQIITQEKPDFLVPEIEAIATSLLVELENNGQKVVPCARAVKLTMDREGIRRLAAETLHLLTSPYQFVDDEAAFRKAAVEIGFPCIVKPVMSSSGKGQSVIRSEQDLTSAWTYSQEGGRAGQGRVIVEKMIPFDFEITLLTIRAIDGIHFCEPIGHRQEKGDYRASWQPQKMSDIALAKAQHIASKVVENLGGYGLFGVELFIQGDEVFFNEVSPRPHDTGLVTLISQDLSEFALHVRAFLGYPIGGIRQLGACASAVILPELSSTNIVYTGLEKALKANRQIRLFAKPEIAGHRRLGVVLAHADSIKHAIEEANLGAQAILAHDGDNHLSR.

Residues 22–23 (EL) and E82 contribute to the N(1)-(5-phospho-beta-D-ribosyl)glycinamide site. ATP is bound by residues R114, K155, 160–165 (SSGKGQ), 195–198 (EKMI), and E203. The 190-residue stretch at 119-308 (RLAAETLHLL…EFALHVRAFL (190 aa)) folds into the ATP-grasp domain. 2 residues coordinate Mg(2+): E267 and E279. N(1)-(5-phospho-beta-D-ribosyl)glycinamide is bound by residues D286, K355, and 362–363 (RR).

It belongs to the PurK/PurT family. Homodimer.

The catalysed reaction is N(1)-(5-phospho-beta-D-ribosyl)glycinamide + formate + ATP = N(2)-formyl-N(1)-(5-phospho-beta-D-ribosyl)glycinamide + ADP + phosphate + H(+). It participates in purine metabolism; IMP biosynthesis via de novo pathway; N(2)-formyl-N(1)-(5-phospho-D-ribosyl)glycinamide from N(1)-(5-phospho-D-ribosyl)glycinamide (formate route): step 1/1. Functionally, involved in the de novo purine biosynthesis. Catalyzes the transfer of formate to 5-phospho-ribosyl-glycinamide (GAR), producing 5-phospho-ribosyl-N-formylglycinamide (FGAR). Formate is provided by PurU via hydrolysis of 10-formyl-tetrahydrofolate. The chain is Formate-dependent phosphoribosylglycinamide formyltransferase from Proteus mirabilis (strain HI4320).